We begin with the raw amino-acid sequence, 453 residues long: tRNA (guanine-N(7)-)-methyltransferase non-catalytic subunit TRM82 (453 aa).

Residues 69–99 (ENEEKGIKKSKTNEGNTIEKKHDAKIPVPGP) form a disordered region. 2 WD repeats span residues 103–143 (PIYS…NDNC) and 244–286 (GHKE…DEFD).

It belongs to the WD repeat TRM82 family. In terms of assembly, forms a heterodimer with the catalytic subunit TRM8.

It is found in the nucleus. The protein operates within tRNA modification; N(7)-methylguanine-tRNA biosynthesis. Required for the formation of N(7)-methylguanine at position 46 (m7G46) in tRNA. In the complex, it is required to stabilize and induce conformational changes of the catalytic subunit. The protein is tRNA (guanine-N(7)-)-methyltransferase non-catalytic subunit TRM82 of Vanderwaltozyma polyspora (strain ATCC 22028 / DSM 70294 / BCRC 21397 / CBS 2163 / NBRC 10782 / NRRL Y-8283 / UCD 57-17) (Kluyveromyces polysporus).